We begin with the raw amino-acid sequence, 283 residues long: Thymidylate synthase (283 aa).

Arg-22 contacts dUMP. The active-site Nucleophile is the Cys-160. Residues 180 to 183 (RSCD), Asn-191, and 221 to 223 (HIY) contribute to the dUMP site. Asp-183 contributes to the (6R)-5,10-methylene-5,6,7,8-tetrahydrofolate binding site. Ser-282 is a binding site for (6R)-5,10-methylene-5,6,7,8-tetrahydrofolate.

Belongs to the thymidylate synthase family. Bacterial-type ThyA subfamily. In terms of assembly, homodimer.

Its subcellular location is the cytoplasm. The catalysed reaction is dUMP + (6R)-5,10-methylene-5,6,7,8-tetrahydrofolate = 7,8-dihydrofolate + dTMP. It functions in the pathway pyrimidine metabolism; dTTP biosynthesis. Catalyzes the reductive methylation of 2'-deoxyuridine-5'-monophosphate (dUMP) to 2'-deoxythymidine-5'-monophosphate (dTMP) while utilizing 5,10-methylenetetrahydrofolate (mTHF) as the methyl donor and reductant in the reaction, yielding dihydrofolate (DHF) as a by-product. This enzymatic reaction provides an intracellular de novo source of dTMP, an essential precursor for DNA biosynthesis. This is Thymidylate synthase from Shewanella loihica (strain ATCC BAA-1088 / PV-4).